The chain runs to 370 residues: Actin-related protein 2/3 complex subunit 1A-B (370 aa).

WD repeat units follow at residues 6-45 (FLLE…WVKC), 50-89 (EHNG…WKPT), 140-179 (PIRS…VDEK), 202-241 (SSGG…SVSQ), 244-284 (TEFL…TFVS), and 322-365 (LHQN…SYIQ).

This sequence belongs to the WD repeat ARPC1 family. In terms of assembly, component of the Arp2/3 complex.

It localises to the cytoplasm. Its subcellular location is the cytoskeleton. The protein localises to the nucleus. Probably functions as a component of the Arp2/3 complex which is involved in regulation of actin polymerization and together with an activating nucleation-promoting factor (NPF) mediates the formation of branched actin networks. In addition to its role in the cytoplasmic cytoskeleton, the Arp2/3 complex also promotes actin polymerization in the nucleus, thereby regulating gene transcription and repair of damaged DNA. In Xenopus laevis (African clawed frog), this protein is Actin-related protein 2/3 complex subunit 1A-B (arpc1a-b).